Here is a 1330-residue protein sequence, read N- to C-terminus: Paired amphipathic helix protein Sin3-like 3 (1330 aa).

2 consecutive PAH domains span residues 8 to 78 and 94 to 164; these read QKLT…LPKG and KRVE…LPDT. Residues 191-246 are compositionally biased toward basic and acidic residues; that stretch reads IITPHPDHDYGTEHIDQDRERPIKKENKEHMRGTNKENEHRDARDFEPHSKKEQFL. Residues 191–281 form a disordered region; sequence IITPHPDHDY…VPSSSTYDEK (91 aa). Positions 262-277 are enriched in polar residues; it reads ISNQSKLSGAVPSSST. The 69-residue stretch at 283-351 folds into the PAH 3 domain; sequence AMKSYSQDLA…DSFIEFLVQC (69 aa). Disordered regions lie at residues 373 to 401, 718 to 775, 789 to 808, 882 to 906, and 920 to 1002; these read GEGK…DRDH, NQNV…GRTS, KNVV…SIER, QEMA…FEED, and SKAN…EAEC. Residues 383-401 show a composition bias toward basic and acidic residues; sequence DNDRDQEHKRDDGLRDRDH. Residues 723-734 are compositionally biased toward low complexity; it reads SGSSSAGESEGS. Residues 789–800 are compositionally biased toward basic and acidic residues; the sequence is KNVVTSDEKPES. The span at 920–932 shows a compositional bias: polar residues; the sequence is SKANDSTGNNISG. Basic and acidic residues-rich tracts occupy residues 933-949 and 956-968; these read DRSR…RAEN and NAAR…RNEY. Over residues 980-989 the composition is skewed to acidic residues; it reads GGEDPEDDLD. S996 is subject to Phosphoserine.

As to quaternary structure, interacts with ERF7 and the histone deacetylase HDA19.

It localises to the nucleus. Acts as a transcriptional repressor. Interacts with ERF7 to repress genes in abscisic acid and drought stress responses. The heterodimer represses transcription by tethering SNL3 to DNA. This chain is Paired amphipathic helix protein Sin3-like 3 (SNL3), found in Arabidopsis thaliana (Mouse-ear cress).